A 465-amino-acid chain; its full sequence is Type II restriction enzyme BsuMI component YdjA (465 aa).

BsuMI restriction activity requires YdiR, YdiS and YdjA.

It catalyses the reaction Endonucleolytic cleavage of DNA to give specific double-stranded fragments with terminal 5'-phosphates.. Functionally, a P subtype restriction enzyme that recognizes the double-stranded sequence 5'-CTCGAG-3'; the cleavage site is unknown. This chain is Type II restriction enzyme BsuMI component YdjA (ydjA), found in Bacillus subtilis (strain 168).